Reading from the N-terminus, the 391-residue chain is Lysophosphatidylinositol acyltransferase 10 (391 aa).

5 helical membrane passes run 10 to 30 (LLGW…NYII), 52 to 72 (AISY…GVRI), 97 to 119 (WMYM…KISL), 323 to 343 (LTSL…IFFV), and 347 to 367 (QLGF…YGGI).

This sequence belongs to the 1-acyl-sn-glycerol-3-phosphate acyltransferase family. In terms of tissue distribution, expressed in seam cells, vulval epithelial cells and the major epithelial syncytium hyp7, and in several head neurons including AIY interneurons.

Its subcellular location is the endoplasmic reticulum membrane. The catalysed reaction is a 2-acyl-sn-glycero-3-phospho-D-myo-inositol + an acyl-CoA = a 1,2-diacyl-sn-glycero-3-phospho-(1D-myo-inositol) + CoA. It catalyses the reaction a 2-acyl-sn-glycero-3-phospho-D-myo-inositol + octadecanoyl-CoA = 1-octadecanoyl-2-acyl-sn-glycero-3-phospho-1D-myo-inositol + CoA. Its pathway is phospholipid metabolism; phosphatidylinositol metabolism. In terms of biological role, acyltransferase required for the fatty acid remodeling of phosphatidylinositol (1,2-diacyl-sn-glycero-3-phosphoinositol or PI). Mediates the conversion of lysophosphatidylinositol (2-acylglycerophosphatidylinositol or LPI) into PI (LPIAT activity). Has preference for saturated and mono-unsaturated fatty acids as acyl donors and sn-2-acyl lysoPI (2-acyl-sn-glycero-3-phospho-D-myo-inositol) as acyl acceptor. Contributes to the asymmetric cell division of epithelial cells. Asymmetric cell division is the fundamental mechanism by which multicellular organisms generate cell diversity. This chain is Lysophosphatidylinositol acyltransferase 10, found in Caenorhabditis elegans.